A 347-amino-acid polypeptide reads, in one-letter code: NADH-ubiquinone oxidoreductase chain 2 (347 aa).

Transmembrane regions (helical) follow at residues 3–23 (PPIL…VLTS), 25–45 (HWLL…PILM), 60–80 (FLTQ…NLMF), 96–116 (GLVT…FWVP), 122–142 (ISLS…LSIL), 153–173 (LLIT…LNQT), 178–198 (ILAY…TYNP), 200–220 (LMIL…MLFM), 237–257 (LPLM…LPPL), 274–294 (DMII…YFYM), and 323–343 (IILL…TPMM).

Belongs to the complex I subunit 2 family. In terms of assembly, core subunit of respiratory chain NADH dehydrogenase (Complex I) which is composed of 45 different subunits. Interacts with TMEM242.

Its subcellular location is the mitochondrion inner membrane. It carries out the reaction a ubiquinone + NADH + 5 H(+)(in) = a ubiquinol + NAD(+) + 4 H(+)(out). Functionally, core subunit of the mitochondrial membrane respiratory chain NADH dehydrogenase (Complex I) which catalyzes electron transfer from NADH through the respiratory chain, using ubiquinone as an electron acceptor. Essential for the catalytic activity and assembly of complex I. This is NADH-ubiquinone oxidoreductase chain 2 from Halichoerus grypus (Gray seal).